We begin with the raw amino-acid sequence, 304 residues long: Transcription factor bHLH94 (304 aa).

The interval 86–107 (VESHPPPQHRRKRRRTRNCKNK) is disordered. Residues 92-104 (PQHRRKRRRTRNC) are compositionally biased toward basic residues. One can recognise a bHLH domain in the interval 112 to 163 (NQRMTHIAVERNRRKQMNEYLAVLRSLMPSSYAQRGDQASIVGGAINYVKEL).

As to quaternary structure, homodimer. As to expression, expressed constitutively in roots, leaves, stems, and flowers.

The protein localises to the nucleus. This is Transcription factor bHLH94 (BHLH94) from Arabidopsis thaliana (Mouse-ear cress).